The sequence spans 211 residues: Guanylate kinase (211 aa).

The 180-residue stretch at 5–184 (GLLIVFSGPS…AAERVKRIIE (180 aa)) folds into the Guanylate kinase-like domain. 12-19 (GPSGVGKG) lines the ATP pocket.

It belongs to the guanylate kinase family.

It localises to the cytoplasm. The catalysed reaction is GMP + ATP = GDP + ADP. Its function is as follows. Essential for recycling GMP and indirectly, cGMP. The polypeptide is Guanylate kinase (Streptococcus pyogenes serotype M1).